A 295-amino-acid chain; its full sequence is UDP-3-O-acyl-N-acetylglucosamine deacetylase (295 aa).

3 residues coordinate Zn(2+): His77, His233, and Asp237. His260 functions as the Proton donor in the catalytic mechanism.

This sequence belongs to the LpxC family. Zn(2+) is required as a cofactor.

The catalysed reaction is a UDP-3-O-[(3R)-3-hydroxyacyl]-N-acetyl-alpha-D-glucosamine + H2O = a UDP-3-O-[(3R)-3-hydroxyacyl]-alpha-D-glucosamine + acetate. The protein operates within glycolipid biosynthesis; lipid IV(A) biosynthesis; lipid IV(A) from (3R)-3-hydroxytetradecanoyl-[acyl-carrier-protein] and UDP-N-acetyl-alpha-D-glucosamine: step 2/6. Catalyzes the hydrolysis of UDP-3-O-myristoyl-N-acetylglucosamine to form UDP-3-O-myristoylglucosamine and acetate, the committed step in lipid A biosynthesis. This is UDP-3-O-acyl-N-acetylglucosamine deacetylase from Solibacter usitatus (strain Ellin6076).